The following is a 211-amino-acid chain: MSAATLEQGLAELGLHLSPATQARLAAFATLLQKWNRVYNLTSIRDAGQVVTHHLLDSLAVLPHLEGITTLADVGSGGGLPGIPLALAAPDCHPALAVTSIETVNKKASFQQQAKIELGLANFTVVNERVENVRPEAKFDAVISRAFSELLDFVGLTAHLLRPGGRFLAMKGVYPRDEIARLPAGFRVVEVHPLTVPGLGAERHLIILERN.

S-adenosyl-L-methionine is bound by residues Gly75, Leu80, 130 to 131 (VE), and Arg145.

It belongs to the methyltransferase superfamily. RNA methyltransferase RsmG family.

It localises to the cytoplasm. It catalyses the reaction guanosine(527) in 16S rRNA + S-adenosyl-L-methionine = N(7)-methylguanosine(527) in 16S rRNA + S-adenosyl-L-homocysteine. In terms of biological role, specifically methylates the N7 position of guanine in position 527 of 16S rRNA. This chain is Ribosomal RNA small subunit methyltransferase G, found in Aromatoleum aromaticum (strain DSM 19018 / LMG 30748 / EbN1) (Azoarcus sp. (strain EbN1)).